The sequence spans 163 residues: NADH-quinone oxidoreductase subunit I (163 aa).

2 4Fe-4S ferredoxin-type domains span residues 53 to 83 (LRRY…IEAG) and 94 to 123 (VRYD…EGPN). Residues Cys-63, Cys-66, Cys-69, Cys-73, Cys-103, Cys-106, Cys-109, and Cys-113 each coordinate [4Fe-4S] cluster.

This sequence belongs to the complex I 23 kDa subunit family. NDH-1 is composed of 14 different subunits. Subunits NuoA, H, J, K, L, M, N constitute the membrane sector of the complex. [4Fe-4S] cluster is required as a cofactor.

It localises to the cell inner membrane. The enzyme catalyses a quinone + NADH + 5 H(+)(in) = a quinol + NAD(+) + 4 H(+)(out). Its function is as follows. NDH-1 shuttles electrons from NADH, via FMN and iron-sulfur (Fe-S) centers, to quinones in the respiratory chain. The immediate electron acceptor for the enzyme in this species is believed to be ubiquinone. Couples the redox reaction to proton translocation (for every two electrons transferred, four hydrogen ions are translocated across the cytoplasmic membrane), and thus conserves the redox energy in a proton gradient. This Allorhizobium ampelinum (strain ATCC BAA-846 / DSM 112012 / S4) (Agrobacterium vitis (strain S4)) protein is NADH-quinone oxidoreductase subunit I.